Consider the following 187-residue polypeptide: Ubiquinone biosynthesis protein COQ4 homolog, mitochondrial (187 aa).

Residues histidine 77, aspartate 78, histidine 81, and glutamate 93 each contribute to the Zn(2+) site.

The protein belongs to the COQ4 family. In terms of assembly, component of a multi-subunit COQ enzyme complex. Zn(2+) is required as a cofactor.

It localises to the mitochondrion inner membrane. The enzyme catalyses a 4-hydroxy-3-methoxy-5-(all-trans-polyprenyl)benzoate + H(+) = a 2-methoxy-6-(all-trans-polyprenyl)phenol + CO2. It participates in cofactor biosynthesis; ubiquinone biosynthesis. Its function is as follows. Lyase that catalyzes the C1-decarboxylation of 4-hydroxy-3-methoxy-5-(all-trans-polyprenyl)benzoic acid into 2-methoxy-6-(all-trans-polyprenyl)phenol during ubiquinone biosynthesis. In Leishmania braziliensis, this protein is Ubiquinone biosynthesis protein COQ4 homolog, mitochondrial.